A 363-amino-acid chain; its full sequence is Probable dual-specificity RNA methyltransferase RlmN (363 aa).

Glu106 serves as the catalytic Proton acceptor. The Radical SAM core domain maps to 112–345; sequence HEYGNSVCVT…VTIRREQGHD (234 aa). A disulfide bond links Cys119 and Cys350. [4Fe-4S] cluster is bound by residues Cys126, Cys130, and Cys133. S-adenosyl-L-methionine contacts are provided by residues 176-177, Ser208, 231-233, and Asn307; these read GE and SLH. Cys350 serves as the catalytic S-methylcysteine intermediate.

It belongs to the radical SAM superfamily. RlmN family. It depends on [4Fe-4S] cluster as a cofactor.

Its subcellular location is the cytoplasm. It carries out the reaction adenosine(2503) in 23S rRNA + 2 reduced [2Fe-2S]-[ferredoxin] + 2 S-adenosyl-L-methionine = 2-methyladenosine(2503) in 23S rRNA + 5'-deoxyadenosine + L-methionine + 2 oxidized [2Fe-2S]-[ferredoxin] + S-adenosyl-L-homocysteine. It catalyses the reaction adenosine(37) in tRNA + 2 reduced [2Fe-2S]-[ferredoxin] + 2 S-adenosyl-L-methionine = 2-methyladenosine(37) in tRNA + 5'-deoxyadenosine + L-methionine + 2 oxidized [2Fe-2S]-[ferredoxin] + S-adenosyl-L-homocysteine. Its function is as follows. Specifically methylates position 2 of adenine 2503 in 23S rRNA and position 2 of adenine 37 in tRNAs. This chain is Probable dual-specificity RNA methyltransferase RlmN, found in Bacillus velezensis (strain DSM 23117 / BGSC 10A6 / LMG 26770 / FZB42) (Bacillus amyloliquefaciens subsp. plantarum).